The chain runs to 352 residues: B1 bradykinin receptor (352 aa).

The Extracellular segment spans residues 1-41; it reads MASWPPLELQSSNQSQLFPQNATACDNAPEAWDLLHRVLPT. Residues Asn-13 and Asn-21 are each glycosylated (N-linked (GlcNAc...) asparagine). A helical membrane pass occupies residues 42–62; it reads FIISICSFGLLGNLFVLLVFL. Residues 63-72 are Cytoplasmic-facing; the sequence is LPRRRLNVAE. A helical membrane pass occupies residues 73-93; sequence IYLANLAASDLVFVLGLPFWA. Residues 94-110 lie on the Extracellular side of the membrane; it reads ENIWNQFNWPFGALLCR. A disulfide bond links Cys-109 and Cys-188. The helical transmembrane segment at 111–131 threads the bilayer; the sequence is VINGIIKANLFISIFLVVAIS. The Cytoplasmic segment spans residues 132–153; sequence QDRYCVLVHPMASRRRQRRRQA. The helical transmembrane segment at 154 to 174 threads the bilayer; sequence RVTCVLIWVVGGLLSIPTFLL. Topologically, residues 175-206 are extracellular; the sequence is RSIQAVPDLNITACILLLPHEAWHFARIVELN. N-linked (GlcNAc...) asparagine glycosylation is present at Asn-184. The chain crosses the membrane as a helical span at residues 207-227; the sequence is ILAFLLPLAAIIFFNYHILAS. The Cytoplasmic segment spans residues 228–250; it reads LRGREEVSRTRCGGSKDSKTTAL. A helical transmembrane segment spans residues 251–271; it reads ILTLVVAFLVCWAPYHFFAFL. Residues 272-294 lie on the Extracellular side of the membrane; sequence EFLFQVQAVRGCFWEDFIDLGLQ. Residues 295–315 traverse the membrane as a helical segment; sequence LANFLAFTNSSLNPVIYVFVG. Residues 316–352 lie on the Cytoplasmic side of the membrane; that stretch reads RLFRTKVWELYKQCTPKSLAPISSSHRKEIFQLFWRN. The S-palmitoyl cysteine moiety is linked to residue Cys-329.

It belongs to the G-protein coupled receptor 1 family. Bradykinin receptor subfamily. BDKRB1 sub-subfamily.

The protein localises to the cell membrane. In terms of biological role, this is a receptor for bradykinin. Could be a factor in chronic pain and inflammation. In Macaca mulatta (Rhesus macaque), this protein is B1 bradykinin receptor (BDKRB1).